The primary structure comprises 771 residues: MSVRNLTNNRHSNSENSVSGSENSFYSSNEQSRQSSSLEPADGQNVRVSGNPFLGSEEFDEDYNSPSGDDERRGANEYSSSSSINYNNDPNSDTSLLANEKNSPERNGQRMSDYKGYYAKTNLTSANNLNNHNNNNYKNIISSSNDNSFASHLQPPDRNLPSHPSSNNMSSFSNNSLIKSPPPFDRYPLVGTRHISAAQSQSQNLINEKKRANMTGSSSSAHDSSLSSTNLYMGEQDFSPFGGYPASFFPLTLDEKEDDDYIHNPNVEEEAKLDRRRFVDDFKHMDRRSFLGLLGILFLFMAGIFIFIVLPAITFSGVVYHHEHVHAANSAGSSSSNTTSKSLTEYQYPQLAAIRTTLVDPDTPDSAKTRVAKDGSKWQLVFSDEFNAEGRTFYDGDDQFWTAPDIHYDATKDLEWYSPDAVTTTNGTLTLRMDAFRNHDLYYRSGMVQSWNKLCFTEGALEVSANLPNYGRVTGLWPGMWTMGNLGRPGYLASTQGVWPYSYEACDAGITPNQSSPDGISYLPGQKLSVCTCDNEDHPNQGVGRGAPEIDILEGEADTILGVGVASQSLQIAPFDIWYMPDYDFIEVYNFTTTTMNTYAGGPFQQAVSAISTLNVTWYEFGEEAGYFQKYAIEYLNDDDNGYIRWFVGENPTFTLYATSLHPSGNIDWRRISKEPMSAILNLGISNNWAYIDWQYIFFPVTMSIDYVRLYQPKGSTSITCDPEDYPTYDYIQSHLNAYYNANLTDWEQAGYTFPKNILTGGCSSSKFSLS.

The span at 1-11 (MSVRNLTNNRH) shows a compositional bias: polar residues. 2 disordered regions span residues 1-112 (MSVR…QRMS) and 126-186 (ANNL…PFDR). Over 1-289 (MSVRNLTNNR…DDFKHMDRRS (289 aa)) the chain is Cytoplasmic. Residues 14 to 37 (SENSVSGSENSFYSSNEQSRQSSS) show a composition bias toward low complexity. Serine 56, serine 65, serine 67, serine 92, serine 103, serine 142, serine 162, serine 165, serine 170, and serine 176 each carry phosphoserine. A compositionally biased stretch (low complexity) spans 76-93 (NEYSSSSSINYNNDPNSD). Composition is skewed to low complexity over residues 126-152 (ANNLNNHNNNNYKNIISSSNDNSFASH) and 159-177 (NLPSHPSSNNMSSFSNNSL). A helical; Signal-anchor for type II membrane protein membrane pass occupies residues 290–310 (FLGLLGILFLFMAGIFIFIVL). The Lumenal segment spans residues 311-771 (PAITFSGVVY…GCSSSKFSLS (461 aa)). 6 N-linked (GlcNAc...) asparagine glycosylation sites follow: asparagine 337, asparagine 426, asparagine 513, asparagine 590, asparagine 615, and asparagine 743. One can recognise a GH16 domain in the interval 353–716 (AIRTTLVDPD…YVRLYQPKGS (364 aa)).

It belongs to the SKN1/KRE6 family.

Its subcellular location is the membrane. Its function is as follows. Required for synthesis of the major beta-glucans of the yeast cell wall. This Saccharomyces cerevisiae (strain ATCC 204508 / S288c) (Baker's yeast) protein is Beta-glucan synthesis-associated protein SKN1 (SKN1).